The chain runs to 44 residues: uncharacterized protein (44 aa).

The chain crosses the membrane as a helical span at residues 4–24 (ISSILIRGGGVLIVVILLLWI).

The protein localises to the membrane. This is an uncharacterized protein from Ornithodoros (relapsing fever ticks).